Here is a 206-residue protein sequence, read N- to C-terminus: Imidazoleglycerol-phosphate dehydratase (206 aa).

Belongs to the imidazoleglycerol-phosphate dehydratase family.

Its subcellular location is the cytoplasm. The enzyme catalyses D-erythro-1-(imidazol-4-yl)glycerol 3-phosphate = 3-(imidazol-4-yl)-2-oxopropyl phosphate + H2O. It functions in the pathway amino-acid biosynthesis; L-histidine biosynthesis; L-histidine from 5-phospho-alpha-D-ribose 1-diphosphate: step 6/9. The protein is Imidazoleglycerol-phosphate dehydratase of Saccharopolyspora erythraea (strain ATCC 11635 / DSM 40517 / JCM 4748 / NBRC 13426 / NCIMB 8594 / NRRL 2338).